The primary structure comprises 131 residues: S-adenosylmethionine decarboxylase proenzyme (131 aa).

S64 acts as the Schiff-base intermediate with substrate; via pyruvic acid in catalysis. S64 is subject to Pyruvic acid (Ser); by autocatalysis. The active-site Proton acceptor; for processing activity is the H69. C84 acts as the Proton donor; for catalytic activity in catalysis.

This sequence belongs to the prokaryotic AdoMetDC family. Type 1 subfamily. As to quaternary structure, heterotetramer of two alpha and two beta chains arranged as a dimer of alpha/beta heterodimers. It depends on pyruvate as a cofactor. Post-translationally, is synthesized initially as an inactive proenzyme. Formation of the active enzyme involves a self-maturation process in which the active site pyruvoyl group is generated from an internal serine residue via an autocatalytic post-translational modification. Two non-identical subunits are generated from the proenzyme in this reaction, and the pyruvate is formed at the N-terminus of the alpha chain, which is derived from the carboxyl end of the proenzyme. The post-translation cleavage follows an unusual pathway, termed non-hydrolytic serinolysis, in which the side chain hydroxyl group of the serine supplies its oxygen atom to form the C-terminus of the beta chain, while the remainder of the serine residue undergoes an oxidative deamination to produce ammonia and the pyruvoyl group blocking the N-terminus of the alpha chain.

The enzyme catalyses S-adenosyl-L-methionine + H(+) = S-adenosyl 3-(methylsulfanyl)propylamine + CO2. Its pathway is amine and polyamine biosynthesis; S-adenosylmethioninamine biosynthesis; S-adenosylmethioninamine from S-adenosyl-L-methionine: step 1/1. In terms of biological role, catalyzes the decarboxylation of S-adenosylmethionine to S-adenosylmethioninamine (dcAdoMet), the propylamine donor required for the synthesis of the polyamines spermine and spermidine from the diamine putrescine. This Thermoplasma acidophilum (strain ATCC 25905 / DSM 1728 / JCM 9062 / NBRC 15155 / AMRC-C165) protein is S-adenosylmethionine decarboxylase proenzyme.